Consider the following 478-residue polypeptide: Alpha-1,3-mannosyl-glycoprotein 4-beta-N-acetylglucosaminyltransferase C (478 aa).

The Cytoplasmic segment spans residues 1-23 (MFKFHQMKHIFEILDKMRCLRKR). The chain crosses the membrane as a helical; Signal-anchor for type II membrane protein span at residues 24 to 44 (STVSFLGVLVIFLLFMNLYIE). The Lumenal portion of the chain corresponds to 45–478 (DSYVLEGDKQ…IIRSISIWTS (434 aa)). N-linked (GlcNAc...) asparagine glycosylation is found at Asn-84 and Asn-215.

It belongs to the glycosyltransferase 54 family. A divalent metal cation is required as a cofactor.

Its subcellular location is the golgi apparatus membrane. The catalysed reaction is N(4)-{beta-D-GlcNAc-(1-&gt;2)-alpha-D-Man-(1-&gt;3)-[beta-D-GlcNAc-(1-&gt;2)-alpha-D-Man-(1-&gt;6)]-beta-D-Man-(1-&gt;4)-beta-D-GlcNAc-(1-&gt;4)-beta-D-GlcNAc}-L-asparaginyl-[protein] + UDP-N-acetyl-alpha-D-glucosamine = N(4)-{beta-D-GlcNAc-(1-&gt;2)-[beta-D-GlcNAc-(1-&gt;4)]-alpha-D-Man-(1-&gt;3)-[beta-D-GlcNAc-(1-&gt;2)-alpha-D-Man-(1-&gt;6)]-beta-D-Man-(1-&gt;4)-beta-D-GlcNAc-(1-&gt;4)-beta-D-GlcNAc}-L-asparaginyl-[protein] + UDP + H(+). The protein operates within protein modification; protein glycosylation. Glycosyltransferase that participates in the transfer of N-acetylglucosamine (GlcNAc) to the core mannose residues of N-linked glycans. Catalyzes the formation of the GlcNAcbeta1-4 branch on the GlcNAcbeta1-2Manalpha1-3 arm of the core structure of N-linked glycans. Essential for the production of tri- and tetra-antennary N-linked sugar chains. Does not catalyze the transfer of GlcNAc to the Manalpha1-6 arm to form GlcNAcBeta1-4Manalpha1-6 linkage ('GnT-VI' activity). This Macaca fascicularis (Crab-eating macaque) protein is Alpha-1,3-mannosyl-glycoprotein 4-beta-N-acetylglucosaminyltransferase C (MGAT4C).